We begin with the raw amino-acid sequence, 85 residues long: Large ribosomal subunit protein bL27 (85 aa).

Belongs to the bacterial ribosomal protein bL27 family.

In Persephonella marina (strain DSM 14350 / EX-H1), this protein is Large ribosomal subunit protein bL27.